Consider the following 269-residue polypeptide: Pertussis toxin subunit 1 homolog (269 aa).

An N-terminal signal peptide occupies residues Met-1–Ala-34.

The protein belongs to the bacterial exotoxin subunit A family.

The sequence is that of Pertussis toxin subunit 1 homolog (ptxA) from Bordetella parapertussis (strain 12822 / ATCC BAA-587 / NCTC 13253).